The sequence spans 336 residues: Dihydroorotate dehydrogenase (quinone) (336 aa).

Residues alanine 62–lysine 66 and threonine 86 contribute to the FMN site. Lysine 66 serves as a coordination point for substrate. Asparagine 111–phenylalanine 115 is a binding site for substrate. FMN-binding residues include asparagine 139 and asparagine 172. Asparagine 172 is a substrate binding site. The Nucleophile role is filled by serine 175. Residue asparagine 177 coordinates substrate. FMN-binding residues include lysine 217 and threonine 245. Asparagine 246–threonine 247 is a substrate binding site. Residues glycine 268, glycine 297, and tyrosine 318–serine 319 contribute to the FMN site.

It belongs to the dihydroorotate dehydrogenase family. Type 2 subfamily. Monomer. It depends on FMN as a cofactor.

It is found in the cell membrane. It carries out the reaction (S)-dihydroorotate + a quinone = orotate + a quinol. It functions in the pathway pyrimidine metabolism; UMP biosynthesis via de novo pathway; orotate from (S)-dihydroorotate (quinone route): step 1/1. Catalyzes the conversion of dihydroorotate to orotate with quinone as electron acceptor. The polypeptide is Dihydroorotate dehydrogenase (quinone) (Salmonella gallinarum (strain 287/91 / NCTC 13346)).